A 70-amino-acid chain; its full sequence is MGLIASAIAIGLAALGAGIGNGLIVSKTIEGTARQPEARGTLTSMMFVGVALVEALPIIAVVIAFMVQGK.

The next 2 helical transmembrane spans lie at 4-24 (IASA…NGLI) and 47-67 (FVGV…AFMV).

Belongs to the ATPase C chain family. As to quaternary structure, F-type ATPases have 2 components, F(1) - the catalytic core - and F(0) - the membrane proton channel. F(1) has five subunits: alpha(3), beta(3), gamma(1), delta(1), epsilon(1). F(0) has three main subunits: a(1), b(2) and c(10-14). The alpha and beta chains form an alternating ring which encloses part of the gamma chain. F(1) is attached to F(0) by a central stalk formed by the gamma and epsilon chains, while a peripheral stalk is formed by the delta and b chains.

The protein resides in the cell membrane. In terms of biological role, f(1)F(0) ATP synthase produces ATP from ADP in the presence of a proton or sodium gradient. F-type ATPases consist of two structural domains, F(1) containing the extramembraneous catalytic core and F(0) containing the membrane proton channel, linked together by a central stalk and a peripheral stalk. During catalysis, ATP synthesis in the catalytic domain of F(1) is coupled via a rotary mechanism of the central stalk subunits to proton translocation. Key component of the F(0) channel; it plays a direct role in translocation across the membrane. A homomeric c-ring of between 10-14 subunits forms the central stalk rotor element with the F(1) delta and epsilon subunits. The polypeptide is ATP synthase subunit c (Priestia megaterium (strain ATCC 12872 / QMB1551) (Bacillus megaterium)).